A 208-amino-acid chain; its full sequence is ER membrane protein complex subunit 9 (208 aa).

Residues 4–139 (VEISALAYVK…VIVLENQGLR (136 aa)) form the MPN domain.

This sequence belongs to the EMC8/EMC9 family. As to quaternary structure, component of the ER membrane protein complex (EMC). EMC8 and EMC9 are mutually exclusive subunits of the EMC complex.

It is found in the endoplasmic reticulum membrane. Its function is as follows. Part of the endoplasmic reticulum membrane protein complex (EMC) that enables the energy-independent insertion into endoplasmic reticulum membranes of newly synthesized membrane proteins. Preferentially accommodates proteins with transmembrane domains that are weakly hydrophobic or contain destabilizing features such as charged and aromatic residues. Involved in the cotranslational insertion of multi-pass membrane proteins in which stop-transfer membrane-anchor sequences become ER membrane spanning helices. It is also required for the post-translational insertion of tail-anchored/TA proteins in endoplasmic reticulum membranes. By mediating the proper cotranslational insertion of N-terminal transmembrane domains in an N-exo topology, with translocated N-terminus in the lumen of the ER, controls the topology of multi-pass membrane proteins like the G protein-coupled receptors. By regulating the insertion of various proteins in membranes, it is indirectly involved in many cellular processes. This chain is ER membrane protein complex subunit 9 (EMC9), found in Homo sapiens (Human).